The primary structure comprises 170 residues: Photosystem I assembly protein Ycf3 (170 aa).

TPR repeat units follow at residues 35–69 (AFTYYRDGVMSAQSEGEYAEALQNYYEAMRPEIDP), 73–106 (SYILYNIGLIHMSNGEHTEALEYYFQALKRNPSL), and 121–154 (GEQAIRQGDPETAEAWSDRAAEYWKQAIALAPGN).

Belongs to the Ycf3 family.

The protein resides in the plastid. The protein localises to the chloroplast thylakoid membrane. In terms of biological role, essential for the assembly of the photosystem I (PSI) complex. May act as a chaperone-like factor to guide the assembly of the PSI subunits. This chain is Photosystem I assembly protein Ycf3, found in Cycas taitungensis (Prince sago).